The primary structure comprises 462 residues: Probable protein phosphatase 2C 1 (462 aa).

The PPM-type phosphatase domain maps to 60–362 (SSCIFTQQGR…DDCAVVCLFL (303 aa)). 4 residues coordinate Mn(2+): Asp-95, Gly-96, Asp-307, and Asp-353. 2 disordered regions span residues 369–394 (ETSD…QGAE) and 421–443 (EADN…LEGV). The span at 376 to 385 (QCFSSATNAV) shows a compositional bias: polar residues. Positions 424 to 434 (NAEKEKTREGE) are enriched in basic and acidic residues.

It belongs to the PP2C family. Interacts with GCN5. Mg(2+) serves as cofactor. Mn(2+) is required as a cofactor.

It carries out the reaction O-phospho-L-seryl-[protein] + H2O = L-seryl-[protein] + phosphate. The enzyme catalyses O-phospho-L-threonyl-[protein] + H2O = L-threonyl-[protein] + phosphate. In terms of biological role, may act as negative regulator of GCN5. The polypeptide is Probable protein phosphatase 2C 1 (PPC6-6) (Arabidopsis thaliana (Mouse-ear cress)).